Here is a 255-residue protein sequence, read N- to C-terminus: 5-oxoprolinase subunit A (255 aa).

The protein belongs to the LamB/PxpA family. In terms of assembly, forms a complex composed of PxpA, PxpB and PxpC.

The enzyme catalyses 5-oxo-L-proline + ATP + 2 H2O = L-glutamate + ADP + phosphate + H(+). In terms of biological role, catalyzes the cleavage of 5-oxoproline to form L-glutamate coupled to the hydrolysis of ATP to ADP and inorganic phosphate. The chain is 5-oxoprolinase subunit A from Thermococcus onnurineus (strain NA1).